A 425-amino-acid polypeptide reads, in one-letter code: Dihydroorotase (425 aa).

The Zn(2+) site is built by H59 and H61. Residues 61–63 (HLR) and N93 contribute to the substrate site. 3 residues coordinate Zn(2+): D151, H178, and H231. N277 lines the substrate pocket. Position 304 (D304) interacts with Zn(2+). D304 is an active-site residue. Substrate contacts are provided by residues H308 and 322-323 (FG).

It belongs to the metallo-dependent hydrolases superfamily. DHOase family. Class I DHOase subfamily. It depends on Zn(2+) as a cofactor.

It catalyses the reaction (S)-dihydroorotate + H2O = N-carbamoyl-L-aspartate + H(+). Its pathway is pyrimidine metabolism; UMP biosynthesis via de novo pathway; (S)-dihydroorotate from bicarbonate: step 3/3. Functionally, catalyzes the reversible cyclization of carbamoyl aspartate to dihydroorotate. The protein is Dihydroorotase of Staphylococcus epidermidis (strain ATCC 35984 / DSM 28319 / BCRC 17069 / CCUG 31568 / BM 3577 / RP62A).